Here is a 183-residue protein sequence, read N- to C-terminus: Ribosome-recycling factor (183 aa).

The protein belongs to the RRF family.

It localises to the cytoplasm. Its function is as follows. Responsible for the release of ribosomes from messenger RNA at the termination of protein biosynthesis. May increase the efficiency of translation by recycling ribosomes from one round of translation to another. In Ureaplasma urealyticum serovar 10 (strain ATCC 33699 / Western), this protein is Ribosome-recycling factor.